The following is a 460-amino-acid chain: tRNA modification GTPase MnmE (460 aa).

Residues Arg-24, Glu-81, and Lys-121 each coordinate (6S)-5-formyl-5,6,7,8-tetrahydrofolate. The region spanning 218–385 (GMVVAIAGPP…LIAAIEDFAA (168 aa)) is the TrmE-type G domain. GTP-binding positions include 228-233 (NVGKST), 247-253 (SPHAGTT), and 272-275 (DTAG). Residues Ser-232 and Thr-253 each contribute to the Mg(2+) site. Lys-460 provides a ligand contact to (6S)-5-formyl-5,6,7,8-tetrahydrofolate.

Belongs to the TRAFAC class TrmE-Era-EngA-EngB-Septin-like GTPase superfamily. TrmE GTPase family. In terms of assembly, homodimer. Heterotetramer of two MnmE and two MnmG subunits. It depends on K(+) as a cofactor.

It localises to the cytoplasm. Its function is as follows. Exhibits a very high intrinsic GTPase hydrolysis rate. Involved in the addition of a carboxymethylaminomethyl (cmnm) group at the wobble position (U34) of certain tRNAs, forming tRNA-cmnm(5)s(2)U34. The sequence is that of tRNA modification GTPase MnmE from Rhodopseudomonas palustris (strain BisB5).